An 84-amino-acid chain; its full sequence is Small ribosomal subunit protein bS16 (84 aa).

Belongs to the bacterial ribosomal protein bS16 family.

The polypeptide is Small ribosomal subunit protein bS16 (Thioalkalivibrio sulfidiphilus (strain HL-EbGR7)).